A 495-amino-acid polypeptide reads, in one-letter code: Glutamyl-tRNA(Gln) amidotransferase subunit A (495 aa).

Catalysis depends on charge relay system residues K79 and S159. The active-site Acyl-ester intermediate is the S183.

It belongs to the amidase family. GatA subfamily. As to quaternary structure, heterotrimer of A, B and C subunits.

The enzyme catalyses L-glutamyl-tRNA(Gln) + L-glutamine + ATP + H2O = L-glutaminyl-tRNA(Gln) + L-glutamate + ADP + phosphate + H(+). In terms of biological role, allows the formation of correctly charged Gln-tRNA(Gln) through the transamidation of misacylated Glu-tRNA(Gln) in organisms which lack glutaminyl-tRNA synthetase. The reaction takes place in the presence of glutamine and ATP through an activated gamma-phospho-Glu-tRNA(Gln). This Gluconobacter oxydans (strain 621H) (Gluconobacter suboxydans) protein is Glutamyl-tRNA(Gln) amidotransferase subunit A.